Consider the following 109-residue polypeptide: Nucleoid-associated protein HS_1309 (109 aa).

The protein belongs to the YbaB/EbfC family. In terms of assembly, homodimer.

The protein resides in the cytoplasm. The protein localises to the nucleoid. Functionally, binds to DNA and alters its conformation. May be involved in regulation of gene expression, nucleoid organization and DNA protection. The chain is Nucleoid-associated protein HS_1309 from Histophilus somni (strain 129Pt) (Haemophilus somnus).